A 413-amino-acid polypeptide reads, in one-letter code: Multifunctional CCA protein (413 aa).

The ATP site is built by Gly8 and Arg11. CTP is bound by residues Gly8 and Arg11. Asp21 and Asp23 together coordinate Mg(2+). Residues Arg91, Arg143, and Arg146 each contribute to the ATP site. The CTP site is built by Arg91, Arg143, and Arg146. The region spanning 232-333 is the HD domain; it reads TGVHVMMVID…VRLLERADAL (102 aa).

Belongs to the tRNA nucleotidyltransferase/poly(A) polymerase family. Bacterial CCA-adding enzyme type 1 subfamily. Monomer. Can also form homodimers and oligomers. Mg(2+) serves as cofactor. It depends on Ni(2+) as a cofactor.

The enzyme catalyses a tRNA precursor + 2 CTP + ATP = a tRNA with a 3' CCA end + 3 diphosphate. It carries out the reaction a tRNA with a 3' CCA end + 2 CTP + ATP = a tRNA with a 3' CCACCA end + 3 diphosphate. Catalyzes the addition and repair of the essential 3'-terminal CCA sequence in tRNAs without using a nucleic acid template. Adds these three nucleotides in the order of C, C, and A to the tRNA nucleotide-73, using CTP and ATP as substrates and producing inorganic pyrophosphate. tRNA 3'-terminal CCA addition is required both for tRNA processing and repair. Also involved in tRNA surveillance by mediating tandem CCA addition to generate a CCACCA at the 3' terminus of unstable tRNAs. While stable tRNAs receive only 3'-terminal CCA, unstable tRNAs are marked with CCACCA and rapidly degraded. This chain is Multifunctional CCA protein, found in Burkholderia pseudomallei (strain K96243).